Reading from the N-terminus, the 319-residue chain is Solute carrier family 25 member 34 (319 aa).

Residues 1-22 (MNSAFSGPSSPTPGPSPPRPPL) are disordered. Residues 10–22 (SPTPGPSPPRPPL) show a composition bias toward pro residues. 3 Solcar repeats span residues 22-115 (LWPP…MQAA), 119-212 (DGPC…AKDW), and 222-313 (LSSL…LRQR). 6 consecutive transmembrane segments (helical) span residues 25 to 45 (PLDF…TNPL), 63 to 83 (SYRR…RTDG), 116 to 138 (GVTD…GAFI), 188 to 209 (VNGA…FSSA), 224 to 244 (SLNT…IMTP), and 296 to 319 (LAPH…PYTH).

Belongs to the mitochondrial carrier (TC 2.A.29) family.

The protein resides in the mitochondrion inner membrane. The chain is Solute carrier family 25 member 34 (slc25a34) from Danio rerio (Zebrafish).